We begin with the raw amino-acid sequence, 371 residues long: Histidinol-phosphate aminotransferase (371 aa).

At K222 the chain carries N6-(pyridoxal phosphate)lysine.

Belongs to the class-II pyridoxal-phosphate-dependent aminotransferase family. Histidinol-phosphate aminotransferase subfamily. In terms of assembly, homodimer. Pyridoxal 5'-phosphate serves as cofactor.

It carries out the reaction L-histidinol phosphate + 2-oxoglutarate = 3-(imidazol-4-yl)-2-oxopropyl phosphate + L-glutamate. It functions in the pathway amino-acid biosynthesis; L-histidine biosynthesis; L-histidine from 5-phospho-alpha-D-ribose 1-diphosphate: step 7/9. This is Histidinol-phosphate aminotransferase from Anoxybacillus flavithermus (strain DSM 21510 / WK1).